Consider the following 110-residue polypeptide: Late cornified envelope-like proline-rich protein 1 (110 aa).

Residues M1–E24 form a disordered region.

It belongs to the cornifin (SPRR) family.

The polypeptide is Late cornified envelope-like proline-rich protein 1 (LELP1) (Bos taurus (Bovine)).